The chain runs to 146 residues: Cyanate hydratase (146 aa).

Catalysis depends on residues R87, E90, and S113.

Belongs to the cyanase family.

It carries out the reaction cyanate + hydrogencarbonate + 3 H(+) = NH4(+) + 2 CO2. Functionally, catalyzes the reaction of cyanate with bicarbonate to produce ammonia and carbon dioxide. This is Cyanate hydratase from Pseudomonas putida (strain ATCC 700007 / DSM 6899 / JCM 31910 / BCRC 17059 / LMG 24140 / F1).